The chain runs to 109 residues: Large ribosomal subunit protein uL24 (109 aa).

This sequence belongs to the universal ribosomal protein uL24 family. As to quaternary structure, part of the 50S ribosomal subunit.

In terms of biological role, one of two assembly initiator proteins, it binds directly to the 5'-end of the 23S rRNA, where it nucleates assembly of the 50S subunit. One of the proteins that surrounds the polypeptide exit tunnel on the outside of the subunit. This chain is Large ribosomal subunit protein uL24, found in Syntrophobacter fumaroxidans (strain DSM 10017 / MPOB).